Consider the following 457-residue polypeptide: Tubulin beta chain (457 aa).

GTP-binding residues include Gln-11, Glu-69, Ser-138, Gly-142, Thr-143, Gly-144, Asn-204, and Asn-226. Mg(2+) is bound at residue Glu-69. 2 positions are modified to phosphoserine: Ser-278 and Ser-280. The segment at Gln-423–Glu-457 is disordered. The segment covering Thr-429 to Gly-440 has biased composition (acidic residues).

It belongs to the tubulin family. In terms of assembly, dimer of alpha and beta chains. A typical microtubule is a hollow water-filled tube with an outer diameter of 25 nm and an inner diameter of 15 nM. Alpha-beta heterodimers associate head-to-tail to form protofilaments running lengthwise along the microtubule wall with the beta-tubulin subunit facing the microtubule plus end conferring a structural polarity. Microtubules usually have 13 protofilaments but different protofilament numbers can be found in some organisms and specialized cells. Mg(2+) is required as a cofactor.

Its subcellular location is the cytoplasm. The protein localises to the cytoskeleton. Tubulin is the major constituent of microtubules, a cylinder consisting of laterally associated linear protofilaments composed of alpha- and beta-tubulin heterodimers. Microtubules grow by the addition of GTP-tubulin dimers to the microtubule end, where a stabilizing cap forms. Below the cap, tubulin dimers are in GDP-bound state, owing to GTPase activity of alpha-tubulin. The chain is Tubulin beta chain (TUB2) from Saccharomyces cerevisiae (strain ATCC 204508 / S288c) (Baker's yeast).